A 216-amino-acid polypeptide reads, in one-letter code: 3-isopropylmalate dehydratase small subunit (216 aa).

It belongs to the LeuD family. LeuD type 1 subfamily. Heterodimer of LeuC and LeuD.

It catalyses the reaction (2R,3S)-3-isopropylmalate = (2S)-2-isopropylmalate. It participates in amino-acid biosynthesis; L-leucine biosynthesis; L-leucine from 3-methyl-2-oxobutanoate: step 2/4. Catalyzes the isomerization between 2-isopropylmalate and 3-isopropylmalate, via the formation of 2-isopropylmaleate. The protein is 3-isopropylmalate dehydratase small subunit of Acidovorax ebreus (strain TPSY) (Diaphorobacter sp. (strain TPSY)).